Here is a 365-residue protein sequence, read N- to C-terminus: Uroporphyrinogen decarboxylase (365 aa).

Residues 27–31 (RQAGR), Asp77, Tyr154, Thr209, and His327 contribute to the substrate site.

Belongs to the uroporphyrinogen decarboxylase family. Homodimer.

It localises to the cytoplasm. It catalyses the reaction uroporphyrinogen III + 4 H(+) = coproporphyrinogen III + 4 CO2. It functions in the pathway porphyrin-containing compound metabolism; protoporphyrin-IX biosynthesis; coproporphyrinogen-III from 5-aminolevulinate: step 4/4. Functionally, catalyzes the decarboxylation of four acetate groups of uroporphyrinogen-III to yield coproporphyrinogen-III. In Nitrosospira multiformis (strain ATCC 25196 / NCIMB 11849 / C 71), this protein is Uroporphyrinogen decarboxylase.